The following is a 194-amino-acid chain: Outer-membrane lipoprotein LolB (194 aa).

The N-terminal stretch at 1 to 18 is a signal peptide; it reads MTLLLRLFTLGCLLLLAG. The N-palmitoyl cysteine moiety is linked to residue C19. C19 carries S-diacylglycerol cysteine lipidation.

This sequence belongs to the LolB family. As to quaternary structure, monomer.

The protein localises to the cell outer membrane. Functionally, plays a critical role in the incorporation of lipoproteins in the outer membrane after they are released by the LolA protein. This chain is Outer-membrane lipoprotein LolB, found in Aeromonas hydrophila subsp. hydrophila (strain ATCC 7966 / DSM 30187 / BCRC 13018 / CCUG 14551 / JCM 1027 / KCTC 2358 / NCIMB 9240 / NCTC 8049).